The sequence spans 691 residues: Beta-galactosidase III (691 aa).

Substrate contacts are provided by arginine 121 and asparagine 159. Glutamate 160 acts as the Proton donor in catalysis. Glutamate 318 acts as the Nucleophile in catalysis. Substrate contacts are provided by residues tryptophan 326 and 366–369 (EKWH).

It belongs to the glycosyl hydrolase 42 family.

The catalysed reaction is Hydrolysis of terminal non-reducing beta-D-galactose residues in beta-D-galactosides.. In terms of biological role, specific for beta-D-anomer-linked galactoside substrates. Hydrolyzes o-nitrophenyl-beta-D-galactopyranoside (ONPG), chromogen 5-bromo-4-chloro-3-indolyl-beta-D-galactopyranoside (X-gal) and to a lesser extent lactose. Hydrolyzes p-nitrophenyl-beta-D-galacturonide very slightly. Does not hydrolyze maltose, sucrose, raffinose or melibiose. Has some transgalactosylation activity yielding galacto-oligosaccharides (GaOS), including O-beta-D-galactopyranosyl-(1,3)-O-beta-D-galactopyranosyl-(1-4)-D-glucopyranose. The sequence is that of Beta-galactosidase III from Bifidobacterium longum subsp. infantis.